The following is a 157-amino-acid chain: 2-C-methyl-D-erythritol 2,4-cyclodiphosphate synthase (157 aa).

2 residues coordinate a divalent metal cation: Asp8 and His10. 4-CDP-2-C-methyl-D-erythritol 2-phosphate is bound by residues 8-10 and 34-35; these read DVH and HS. His42 is a binding site for a divalent metal cation. 4-CDP-2-C-methyl-D-erythritol 2-phosphate contacts are provided by residues 56–58, 132–135, Phe139, and Arg142; these read DIG and TTNE.

This sequence belongs to the IspF family. Homotrimer. It depends on a divalent metal cation as a cofactor.

The enzyme catalyses 4-CDP-2-C-methyl-D-erythritol 2-phosphate = 2-C-methyl-D-erythritol 2,4-cyclic diphosphate + CMP. The protein operates within isoprenoid biosynthesis; isopentenyl diphosphate biosynthesis via DXP pathway; isopentenyl diphosphate from 1-deoxy-D-xylulose 5-phosphate: step 4/6. Involved in the biosynthesis of isopentenyl diphosphate (IPP) and dimethylallyl diphosphate (DMAPP), two major building blocks of isoprenoid compounds. Catalyzes the conversion of 4-diphosphocytidyl-2-C-methyl-D-erythritol 2-phosphate (CDP-ME2P) to 2-C-methyl-D-erythritol 2,4-cyclodiphosphate (ME-CPP) with a corresponding release of cytidine 5-monophosphate (CMP). The chain is 2-C-methyl-D-erythritol 2,4-cyclodiphosphate synthase from Symbiobacterium thermophilum (strain DSM 24528 / JCM 14929 / IAM 14863 / T).